The following is a 414-amino-acid chain: Gamma-glutamyl phosphate reductase (414 aa).

It belongs to the gamma-glutamyl phosphate reductase family.

It is found in the cytoplasm. The enzyme catalyses L-glutamate 5-semialdehyde + phosphate + NADP(+) = L-glutamyl 5-phosphate + NADPH + H(+). The protein operates within amino-acid biosynthesis; L-proline biosynthesis; L-glutamate 5-semialdehyde from L-glutamate: step 2/2. Functionally, catalyzes the NADPH-dependent reduction of L-glutamate 5-phosphate into L-glutamate 5-semialdehyde and phosphate. The product spontaneously undergoes cyclization to form 1-pyrroline-5-carboxylate. The sequence is that of Gamma-glutamyl phosphate reductase from Caldanaerobacter subterraneus subsp. tengcongensis (strain DSM 15242 / JCM 11007 / NBRC 100824 / MB4) (Thermoanaerobacter tengcongensis).